The chain runs to 130 residues: Protein ApaG (130 aa).

An ApaG domain is found at 3-127; the sequence is RAVTRGIEVS…FSLDIPEQRR (125 aa).

The chain is Protein ApaG from Brucella anthropi (strain ATCC 49188 / DSM 6882 / CCUG 24695 / JCM 21032 / LMG 3331 / NBRC 15819 / NCTC 12168 / Alc 37) (Ochrobactrum anthropi).